Consider the following 448-residue polypeptide: Exodeoxyribonuclease 7 large subunit (448 aa).

It belongs to the XseA family. Heterooligomer composed of large and small subunits.

It localises to the cytoplasm. The enzyme catalyses Exonucleolytic cleavage in either 5'- to 3'- or 3'- to 5'-direction to yield nucleoside 5'-phosphates.. Its function is as follows. Bidirectionally degrades single-stranded DNA into large acid-insoluble oligonucleotides, which are then degraded further into small acid-soluble oligonucleotides. The chain is Exodeoxyribonuclease 7 large subunit from Photobacterium profundum (strain SS9).